The primary structure comprises 252 residues: 5'-nucleotidase SurE (252 aa).

A divalent metal cation-binding residues include Asp-8, Asp-9, Ser-40, and Asn-92.

Belongs to the SurE nucleotidase family. A divalent metal cation serves as cofactor.

The protein localises to the cytoplasm. The enzyme catalyses a ribonucleoside 5'-phosphate + H2O = a ribonucleoside + phosphate. Nucleotidase that shows phosphatase activity on nucleoside 5'-monophosphates. This Mesorhizobium japonicum (strain LMG 29417 / CECT 9101 / MAFF 303099) (Mesorhizobium loti (strain MAFF 303099)) protein is 5'-nucleotidase SurE.